Consider the following 78-residue polypeptide: Acyl carrier protein (78 aa).

Residues 4–78 (AQIKEKVYDI…QQAIDYIVKK (75 aa)) enclose the Carrier domain. S39 is subject to O-(pantetheine 4'-phosphoryl)serine.

The protein belongs to the acyl carrier protein (ACP) family. In terms of processing, 4'-phosphopantetheine is transferred from CoA to a specific serine of apo-ACP by AcpS. This modification is essential for activity because fatty acids are bound in thioester linkage to the sulfhydryl of the prosthetic group.

The protein localises to the cytoplasm. It functions in the pathway lipid metabolism; fatty acid biosynthesis. Carrier of the growing fatty acid chain in fatty acid biosynthesis. This chain is Acyl carrier protein, found in Chlorobium phaeobacteroides (strain DSM 266 / SMG 266 / 2430).